An 830-amino-acid polypeptide reads, in one-letter code: Lon protease 3 (830 aa).

A Lon N-terminal domain is found at 19–213; that stretch reads VPLLPLRDII…RLIELMQAEI (195 aa). 367–374 lines the ATP pocket; it reads GPPGVGKT. The 181-residue stretch at 604–784 folds into the Lon proteolytic domain; the sequence is RDEVGLVNGL…DDVLREALIL (181 aa). Residues Ser690 and Lys733 contribute to the active site. The segment covering 811-823 has biased composition (low complexity); the sequence is PVKAPPAAAGEPT. Positions 811–830 are disordered; sequence PVKAPPAAAGEPTPAAPPGA.

The protein belongs to the peptidase S16 family. As to quaternary structure, homohexamer. Organized in a ring with a central cavity.

Its subcellular location is the cytoplasm. It catalyses the reaction Hydrolysis of proteins in presence of ATP.. ATP-dependent serine protease that mediates the selective degradation of mutant and abnormal proteins as well as certain short-lived regulatory proteins. Required for cellular homeostasis and for survival from DNA damage and developmental changes induced by stress. Degrades polypeptides processively to yield small peptide fragments that are 5 to 10 amino acids long. Binds to DNA in a double-stranded, site-specific manner. This chain is Lon protease 3, found in Sorangium cellulosum (strain So ce56) (Polyangium cellulosum (strain So ce56)).